The chain runs to 152 residues: Kininogen-1c (152 aa).

The N-terminal stretch at 1–23 is a signal peptide; that stretch reads MRLWFCLSLFIVLCLEHFPGTLA. Residues 28 to 44 are compositionally biased toward basic and acidic residues; the sequence is VPESEEKTEQFLRDLPK. Residues 28–152 form a disordered region; that stretch reads VPESEEKTEQ…RGKFHSQSHV (125 aa).

The protein belongs to the bradykinin-related peptide family. In terms of tissue distribution, expressed by the skin glands.

It localises to the secreted. Potent vasodilator. Binds B1 (BDKRB1) and B2 (BDKRB2) bradykinin receptors. The protein is Kininogen-1c of Bombina maxima (Giant fire-bellied toad).